Consider the following 96-residue polypeptide: Co-chaperonin GroES (96 aa).

It belongs to the GroES chaperonin family. In terms of assembly, heptamer of 7 subunits arranged in a ring. Interacts with the chaperonin GroEL.

Its subcellular location is the cytoplasm. Together with the chaperonin GroEL, plays an essential role in assisting protein folding. The GroEL-GroES system forms a nano-cage that allows encapsulation of the non-native substrate proteins and provides a physical environment optimized to promote and accelerate protein folding. GroES binds to the apical surface of the GroEL ring, thereby capping the opening of the GroEL channel. The protein is Co-chaperonin GroES of Actinobacillus pleuropneumoniae serotype 3 (strain JL03).